A 296-amino-acid polypeptide reads, in one-letter code: Ribonuclease HIII (296 aa).

Positions 80–296 (LALIGSDEVG…NTKKAYQRLK (217 aa)) constitute an RNase H type-2 domain. 3 residues coordinate a divalent metal cation: Asp-86, Glu-87, and Asp-191.

It belongs to the RNase HII family. RnhC subfamily. It depends on Mn(2+) as a cofactor. Mg(2+) is required as a cofactor.

It is found in the cytoplasm. It catalyses the reaction Endonucleolytic cleavage to 5'-phosphomonoester.. In terms of biological role, endonuclease that specifically degrades the RNA of RNA-DNA hybrids. The polypeptide is Ribonuclease HIII (Streptococcus thermophilus (strain CNRZ 1066)).